Reading from the N-terminus, the 830-residue chain is Leucine--tRNA ligase (830 aa).

Residues 48–58 (PYPSGAIHMGH) carry the 'HIGH' region motif. A 'KMSKS' region motif is present at residues 596–600 (KMSKS). ATP is bound at residue lysine 599.

It belongs to the class-I aminoacyl-tRNA synthetase family.

The protein localises to the cytoplasm. It catalyses the reaction tRNA(Leu) + L-leucine + ATP = L-leucyl-tRNA(Leu) + AMP + diphosphate. The protein is Leucine--tRNA ligase of Helicobacter hepaticus (strain ATCC 51449 / 3B1).